The following is a 287-amino-acid chain: Nematocyst expressed protein 6 (287 aa).

The first 20 residues, 1–20 (MKGFIFAGVLVSALICLAEG), serve as a signal peptide directing secretion. A Peptidase M12A domain is found at 53 to 249 (RAALRDRYLW…RQTNLMYKCN (197 aa)). 2 cysteine pairs are disulfide-bonded: Cys95–Cys248 and Cys116–Cys139. His146 is a binding site for Zn(2+). Glu147 is a catalytic residue. Residues His150 and His156 each coordinate Zn(2+). The segment at 249–287 (NAQGDSELQPVNDEDEDKDGGDSKKKPDPKGPKPGEIEE) is disordered. Positions 268 to 287 (GGDSKKKPDPKGPKPGEIEE) are enriched in basic and acidic residues.

Zn(2+) serves as cofactor. As to expression, nematocyte and pharyngeal gland.

It localises to the secreted. The protein localises to the nematocyst. Functionally, metalloprotease. The sequence is that of Nematocyst expressed protein 6 from Nematostella vectensis (Starlet sea anemone).